We begin with the raw amino-acid sequence, 626 residues long: Myelin-associated glycoprotein (626 aa).

A signal peptide spans 1-19 (MIFLTTLPLFWIMISASRG). The interaction with RTN4R and RTN4RL2 stretch occupies residues 20–325 (GHWGAWMPSS…RTVELSVMYA (306 aa)). The Extracellular segment spans residues 20-516 (GHWGAWMPSS…HRLMWAKIGP (497 aa)). In terms of domain architecture, Ig-like V-type spans 22-120 (WGAWMPSSIS…LGGKYYFRGD (99 aa)). Disulfide bonds link C37-C165, C42-C100, and C159-C217. A ganglioside GT1b (d18:1(4E)) is bound at residue 65–67 (YPK). N99 carries N-linked (GlcNAc...) asparagine glycosylation. Residues R118 and 124–128 (YNQYT) each bind a ganglioside GT1b (d18:1(4E)). Ig-like C2-type domains follow at residues 139-237 (NTPN…LDVK), 241-325 (VIVE…VMYA), 327-412 (WKPT…VEFA), and 413-508 (PIIL…GAHR). N-linked (GlcNAc...) asparagine glycosylation is found at N223 and N246. C261 and C305 form a disulfide bridge. N315 and N332 each carry an N-linked (GlcNAc...) asparagine glycan. Residues C347 and C392 are joined by a disulfide bond. N-linked (GlcNAc...) asparagine glycosylation occurs at N406. Cystine bridges form between C421–C430 and C432–C488. Residues N450 and N454 are each glycosylated (N-linked (GlcNAc...) asparagine). Residues 517–536 (VGAVVAFAILIAIVCYITQT) form a helical membrane-spanning segment. Residue C531 is the site of S-palmitoyl cysteine attachment. The Cytoplasmic segment spans residues 537–626 (RRKKNVTESP…LAEYAEIRVK (90 aa)). Phosphoserine is present on residues S545, S547, and S549. Residues 577–626 (LGSERRLLGLRGEPPELDLSYSHSDLGKRPTKDSYTLTEELAEYAEIRVK) are required for normal axon myelination in the central nervous system. Residues 581–608 (RRLLGLRGEPPELDLSYSHSDLGKRPTK) form a disordered region.

The protein belongs to the immunoglobulin superfamily. SIGLEC (sialic acid binding Ig-like lectin) family. In terms of assembly, monomer and homodimer. Interacts (via the first three N-terminal Ig-like domains) with RTN4R and RTN4RL2. Interacts with isoform 2 of BSG. In terms of processing, N-glycosylated. Post-translationally, phosphorylated on tyrosine residues. Ubiquitinated, leading to proteasomal degradation. In terms of tissue distribution, detected in myelin. Detected in olfactory bulb and throughout the brain (at protein level). Detected in brain.

Its subcellular location is the cell membrane. The protein resides in the membrane raft. In terms of biological role, adhesion molecule that mediates interactions between myelinating cells and neurons by binding to neuronal sialic acid-containing gangliosides and to the glycoproteins RTN4R and RTN4RL2. Not required for initial myelination, but seems to play a role in the maintenance of normal axon myelination. Protects motoneurons against apoptosis, also after injury; protection against apoptosis is probably mediated via interaction with neuronal RTN4R and RTN4RL2. Required to prevent degeneration of myelinated axons in adults; this probably depends on binding to gangliosides on the axon cell membrane. Negative regulator of neurite outgrowth; in dorsal root ganglion neurons the inhibition is mediated primarily via binding to neuronal RTN4R or RTN4RL2 and to a lesser degree via binding to neuronal gangliosides. In cerebellar granule cells the inhibition is mediated primarily via binding to neuronal gangliosides. In sensory neurons, inhibition of neurite extension depends only partially on RTN4R, RTN4RL2 and gangliosides. Inhibits axon longitudinal growth. Inhibits axon outgrowth by binding to RTN4R. Preferentially binds to alpha-2,3-linked sialic acid. Binds ganglioside Gt1b. This chain is Myelin-associated glycoprotein (Mag), found in Rattus norvegicus (Rat).